A 388-amino-acid chain; its full sequence is Protein-glutamate methylesterase/protein-glutamine glutaminase 4 (388 aa).

The region spanning 4-121 is the Response regulatory domain; the sequence is KVLVVDDSGF…SGDASKIKRL (118 aa). Asp55 is modified (4-aspartylphosphate). A disordered region spans residues 137-196; it reads SGASAPASVPQPAKPAAPIPVREPPKPAAPVTRPAEPRAKAPPAKPEPKPEVKAAKSRRT. Residues 148 to 164 are compositionally biased toward pro residues; the sequence is PAKPAAPIPVREPPKPA. The CheB-type methylesterase domain maps to 197–388; it reads PRQDYKVVLI…FAPRLIDGVG (192 aa). Residues Ser209, His236, and Asp332 contribute to the active site.

It belongs to the CheB family. In terms of processing, phosphorylated by CheA. Phosphorylation of the N-terminal regulatory domain activates the methylesterase activity.

The protein localises to the cytoplasm. It carries out the reaction [protein]-L-glutamate 5-O-methyl ester + H2O = L-glutamyl-[protein] + methanol + H(+). The enzyme catalyses L-glutaminyl-[protein] + H2O = L-glutamyl-[protein] + NH4(+). In terms of biological role, involved in chemotaxis. Part of a chemotaxis signal transduction system that modulates chemotaxis in response to various stimuli. Catalyzes the demethylation of specific methylglutamate residues introduced into the chemoreceptors (methyl-accepting chemotaxis proteins or MCP) by CheR. Also mediates the irreversible deamidation of specific glutamine residues to glutamic acid. This chain is Protein-glutamate methylesterase/protein-glutamine glutaminase 4, found in Hahella chejuensis (strain KCTC 2396).